The following is a 90-amino-acid chain: Probable Fe(2+)-trafficking protein (90 aa).

It belongs to the Fe(2+)-trafficking protein family. As to quaternary structure, monomer.

Could be a mediator in iron transactions between iron acquisition and iron-requiring processes, such as synthesis and/or repair of Fe-S clusters in biosynthetic enzymes. In Pectobacterium carotovorum subsp. carotovorum (strain PC1), this protein is Probable Fe(2+)-trafficking protein.